The primary structure comprises 410 residues: Sprouty-related, EVH1 domain-containing protein 3 (410 aa).

The WH1 domain occupies 1–113; the sequence is MVRVRAVVMA…KSLLAALAAL (113 aa). The disordered stretch occupies residues 117 to 210; it reads SLTPSSSSSS…PEPSEPLAGA (94 aa). 2 stretches are compositionally biased toward low complexity: residues 120 to 130 and 147 to 165; these read PSSSSSSSSPS and DSSS…AAAP. The region spanning 195-244 is the KBD domain; it reads LPFTGIPEPSEPLAGAGGLGWGGRGYEDYRRSGPPAPLALSTCVVRFAKT. Position 240 is an asymmetric dimethylarginine (Arg-240). At Arg-248 the chain carries Omega-N-methylarginine. The tract at residues 258–288 is disordered; that stretch reads LPAPLTEAAPPAPPARPPPGPGPSSAPAKAS. A compositionally biased stretch (pro residues) spans 267-281; the sequence is PPAPPARPPPGPGPS. Residues 296–407 enclose the SPR domain; sequence RCVHCRALFR…CAGCGGRHEE (112 aa).

As to quaternary structure, interacts with palmitoyltransferase ZDHHC17/HIP14; the interaction leads to palmitoylation of SPRED3. Phosphorylated on tyrosine. Post-translationally, palmitoylated by ZDHHC17/HIP14. In terms of processing, ubiquitinated.

The protein resides in the cell membrane. Tyrosine kinase substrate that inhibits growth-factor-mediated activation of MAP kinase. Inhibits fibroblast growth factor (FGF)-induced retinal lens fiber differentiation, probably by inhibiting FGF-mediated phosphorylation of ERK1/2. Inhibits TGFB-induced epithelial-to-mesenchymal transition in lens epithelial cells. The chain is Sprouty-related, EVH1 domain-containing protein 3 (SPRED3) from Homo sapiens (Human).